Here is a 366-residue protein sequence, read N- to C-terminus: UDP-N-acetylenolpyruvoylglucosamine reductase (366 aa).

The region spanning 29–203 (VGPVARTLVT…LEVEFALDAS (175 aa)) is the FAD-binding PCMH-type domain. R177 is a catalytic residue. S258 serves as the catalytic Proton donor. E358 is a catalytic residue.

This sequence belongs to the MurB family. FAD serves as cofactor.

The protein localises to the cytoplasm. The catalysed reaction is UDP-N-acetyl-alpha-D-muramate + NADP(+) = UDP-N-acetyl-3-O-(1-carboxyvinyl)-alpha-D-glucosamine + NADPH + H(+). Its pathway is cell wall biogenesis; peptidoglycan biosynthesis. Cell wall formation. This chain is UDP-N-acetylenolpyruvoylglucosamine reductase, found in Mycobacterium ulcerans (strain Agy99).